The chain runs to 193 residues: uncharacterized protein (193 aa).

Transmembrane regions (helical) follow at residues 8 to 28 (GVLV…VVAI), 46 to 66 (FFIA…VASA), 82 to 102 (GLSI…ALVV), and 141 to 161 (IALT…LLAA).

To M.leprae ML1222.

It localises to the cell membrane. This is an uncharacterized protein from Mycobacterium tuberculosis (strain CDC 1551 / Oshkosh).